The following is a 366-amino-acid chain: Methylthioribose-1-phosphate isomerase (366 aa).

Asp-260 functions as the Proton donor in the catalytic mechanism.

It belongs to the eIF-2B alpha/beta/delta subunits family. MtnA subfamily.

It is found in the cytoplasm. The protein localises to the nucleus. It catalyses the reaction 5-(methylsulfanyl)-alpha-D-ribose 1-phosphate = 5-(methylsulfanyl)-D-ribulose 1-phosphate. The protein operates within amino-acid biosynthesis; L-methionine biosynthesis via salvage pathway; L-methionine from S-methyl-5-thio-alpha-D-ribose 1-phosphate: step 1/6. Its function is as follows. Catalyzes the interconversion of methylthioribose-1-phosphate (MTR-1-P) into methylthioribulose-1-phosphate (MTRu-1-P). This Caenorhabditis briggsae protein is Methylthioribose-1-phosphate isomerase.